Consider the following 498-residue polypeptide: Lysine--tRNA ligase (498 aa).

Mg(2+)-binding residues include Glu-411 and Glu-418.

This sequence belongs to the class-II aminoacyl-tRNA synthetase family. As to quaternary structure, homodimer. It depends on Mg(2+) as a cofactor.

The protein localises to the cytoplasm. The catalysed reaction is tRNA(Lys) + L-lysine + ATP = L-lysyl-tRNA(Lys) + AMP + diphosphate. In Enterococcus faecalis (strain ATCC 700802 / V583), this protein is Lysine--tRNA ligase.